A 322-amino-acid polypeptide reads, in one-letter code: Acetyl-coenzyme A carboxylase carboxyl transferase subunit alpha (322 aa).

The 264-residue stretch at 30 to 293 (ALDISAEIAR…KQTLQESLRK (264 aa)) folds into the CoA carboxyltransferase C-terminal domain.

The protein belongs to the AccA family. In terms of assembly, acetyl-CoA carboxylase is a heterohexamer composed of biotin carboxyl carrier protein (AccB), biotin carboxylase (AccC) and two subunits each of ACCase subunit alpha (AccA) and ACCase subunit beta (AccD).

Its subcellular location is the cytoplasm. The catalysed reaction is N(6)-carboxybiotinyl-L-lysyl-[protein] + acetyl-CoA = N(6)-biotinyl-L-lysyl-[protein] + malonyl-CoA. Its pathway is lipid metabolism; malonyl-CoA biosynthesis; malonyl-CoA from acetyl-CoA: step 1/1. Its function is as follows. Component of the acetyl coenzyme A carboxylase (ACC) complex. First, biotin carboxylase catalyzes the carboxylation of biotin on its carrier protein (BCCP) and then the CO(2) group is transferred by the carboxyltransferase to acetyl-CoA to form malonyl-CoA. The chain is Acetyl-coenzyme A carboxylase carboxyl transferase subunit alpha from Nitrosomonas europaea (strain ATCC 19718 / CIP 103999 / KCTC 2705 / NBRC 14298).